The following is a 179-amino-acid chain: Interleukin-22 (179 aa).

Residues 1–33 (MAVLQKSMSFSLMGTLAASCLLLIALWAQEANA) form the signal peptide. Cystine bridges form between cysteine 40/cysteine 132 and cysteine 89/cysteine 178. N-linked (GlcNAc...) asparagine glycans are attached at residues asparagine 54, asparagine 68, and asparagine 97.

Belongs to the IL-10 family.

It localises to the secreted. Functionally, cytokine that plays a critical role in modulating tissue responses during inflammation. Plays an essential role in the regeneration of epithelial cells to maintain barrier function after injury and for the prevention of further tissue damage. Unlike most of the cytokines, has no effect on immune cells. Signals through a heterodimeric receptor composed of two subunits, the specific receptor IL22RA1 which is present on non-immune cells in many organs and the shared subunit IL10RB. Ligation of IL22RA1 with IL22 induces activation of the tyrosine kinases JAK1 and TYK2, which in turn activates STAT3. In turn, promotes cell survival and proliferation through STAT3, ERK1/2 and PI3K/AKT pathways. Promotes phosphorylation of GSK3B at 'Ser-9' and CTTN. Promotes epithelial cell spreading. The sequence is that of Interleukin-22 (Il22) from Mus musculus (Mouse).